Here is a 347-residue protein sequence, read N- to C-terminus: S-adenosylmethionine:tRNA ribosyltransferase-isomerase (347 aa).

Belongs to the QueA family. As to quaternary structure, monomer.

It localises to the cytoplasm. The catalysed reaction is 7-aminomethyl-7-carbaguanosine(34) in tRNA + S-adenosyl-L-methionine = epoxyqueuosine(34) in tRNA + adenine + L-methionine + 2 H(+). It functions in the pathway tRNA modification; tRNA-queuosine biosynthesis. Its function is as follows. Transfers and isomerizes the ribose moiety from AdoMet to the 7-aminomethyl group of 7-deazaguanine (preQ1-tRNA) to give epoxyqueuosine (oQ-tRNA). In Pseudomonas paraeruginosa (strain DSM 24068 / PA7) (Pseudomonas aeruginosa (strain PA7)), this protein is S-adenosylmethionine:tRNA ribosyltransferase-isomerase.